Consider the following 188-residue polypeptide: Augmin complex subunit dgt4 (188 aa).

Residues 141-163 are a coiled coil; it reads QREFAQNQEALRSLRTAVDGLEN.

As to quaternary structure, component of the augmin complex composed of dgt2, dgt3, dgt4, dgt5, dgt6, msd1, msd5 and wac. The complex interacts directly or indirectly with microtubules and is required for centrosome-independent generation of spindle microtubules.

It is found in the cytoplasm. The protein localises to the cytoskeleton. The protein resides in the spindle. Its function is as follows. As part of the augmin complex, plays a role in centrosome-independent generation of spindle microtubules. The complex is required for mitotic spindle assembly through its involvement in localizing gamma-tubulin to spindle microtubules. This Drosophila melanogaster (Fruit fly) protein is Augmin complex subunit dgt4.